We begin with the raw amino-acid sequence, 152 residues long: Ribosome maturation factor RimP (152 aa).

It belongs to the RimP family.

Its subcellular location is the cytoplasm. In terms of biological role, required for maturation of 30S ribosomal subunits. This is Ribosome maturation factor RimP from Burkholderia multivorans (strain ATCC 17616 / 249).